The following is a 355-amino-acid chain: UDP-3-O-acylglucosamine N-acyltransferase (355 aa).

The active-site Proton acceptor is H252.

It belongs to the transferase hexapeptide repeat family. LpxD subfamily. Homotrimer.

The enzyme catalyses a UDP-3-O-[(3R)-3-hydroxyacyl]-alpha-D-glucosamine + a (3R)-hydroxyacyl-[ACP] = a UDP-2-N,3-O-bis[(3R)-3-hydroxyacyl]-alpha-D-glucosamine + holo-[ACP] + H(+). The protein operates within bacterial outer membrane biogenesis; LPS lipid A biosynthesis. In terms of biological role, catalyzes the N-acylation of UDP-3-O-acylglucosamine using 3-hydroxyacyl-ACP as the acyl donor. Is involved in the biosynthesis of lipid A, a phosphorylated glycolipid that anchors the lipopolysaccharide to the outer membrane of the cell. The chain is UDP-3-O-acylglucosamine N-acyltransferase from Polynucleobacter asymbioticus (strain DSM 18221 / CIP 109841 / QLW-P1DMWA-1) (Polynucleobacter necessarius subsp. asymbioticus).